The sequence spans 815 residues: Cell division control protein 53 (815 aa).

The required for interaction with SKP1/CBF3D and F-box protein stretch occupies residues 9 to 280; the sequence is DDLEATWNFI…WDDHTKKPLS (272 aa). Positions 448–748 are required for interaction with CDC34/UBC3; sequence KKATKPEVAS…IEKELNTERQ (301 aa). The region spanning 746-807 is the Cullin neddylation domain; sequence ERQIFLEACI…QKGYLQRGDD (62 aa). Residue Lys760 forms a Glycyl lysine isopeptide (Lys-Gly) (interchain with G-Cter in NEDD8) linkage.

Belongs to the cullin family. In terms of assembly, component of multiple SCF (SKP1-CUL1-F-box) E3 ubiquitin-protein ligase complexes formed of CUL1, SKP1/HRT1, RBX1 and a variable F-box domain-containing protein as substrate-specific adapter. Component of the SCF(CDC4) complex containing CDC4. Component of the SCF(MET30) complex containing MET30. Component of the SCF(GRR1) complex containing GRR1. Component of the probable SCF(DIA2) complex containing DIA2. Component of the probable SCF(YDR131C) complex containing YDR131C. Component of the probable SCF(YDR306C) complex containing YDR306C. Component of the probable SCF(YLR224W) complex containing YLR224W. Component of the probable SCF(YJL149W) complex containing YJL149W. Component of the probable SCF(YNL311C) complex containing YNL311C. Component of the probable SCF(MDM30) complex containing MDM30. Component of the probable SCF(UFO1) complex containing UFO1. Component of the probable SCF(HRT3) complex containing HRT3. Component of the probable SCF(YBR280C) complex containing YBR280C. Component of the probable SCF(YBR352W) complex containing YBR352W. Interacts with DCN1, YBR280C, YLR224W and YLR352W. The unneddylated form interacts with LAG2/CAND1 and the interaction mediates the exchange of the F-box substrate-specific subunit. In terms of processing, neddylated; enhancing the ubiquitin-ligase activity.

The protein resides in the cytoplasm. The protein localises to the nucleus. Functionally, core component of multiple cullin-RING-based SCF (SKP1-CUL1-F-box) E3 ubiquitin-protein ligase complexes which mediate the ubiquitination and subsequent proteasomal degradation of target proteins. As a scaffold protein may contribute to catalysis through positioning of the substrate and the ubiquitin-conjugating enzyme. The SCF complex associates with CDC34 as the E2 ubiquitin-conjugating enzyme. The functional specificity of the SCF complex depends on the type of F-box protein. SCF(CDC4) controls the G1-to-S phase transition; it directs ubiquitination of the phosphorylated CDK inhibitor SIC1 and of CDC6. SCF(CDC4) directs ubiquitination of GCN4. SCF(GRR1) directs ubiquitination of phosphorylated CLN1, CLN2 and GIC2. SCF(MET30) directs ubiquitination of MET4. SCF(DIA2) is specifically involved in the pheromone induced degradation of phosphorylated TEC1. SCF(MDM30) seems to direct ubiquitination of FZ01. Involved in the regulation of methionine biosynthesis genes. This Saccharomyces cerevisiae (strain ATCC 204508 / S288c) (Baker's yeast) protein is Cell division control protein 53 (CDC53).